Reading from the N-terminus, the 229-residue chain is 2-C-methyl-D-erythritol 4-phosphate cytidylyltransferase (229 aa).

It belongs to the IspD/TarI cytidylyltransferase family. IspD subfamily.

The catalysed reaction is 2-C-methyl-D-erythritol 4-phosphate + CTP + H(+) = 4-CDP-2-C-methyl-D-erythritol + diphosphate. The protein operates within isoprenoid biosynthesis; isopentenyl diphosphate biosynthesis via DXP pathway; isopentenyl diphosphate from 1-deoxy-D-xylulose 5-phosphate: step 2/6. Its function is as follows. Catalyzes the formation of 4-diphosphocytidyl-2-C-methyl-D-erythritol from CTP and 2-C-methyl-D-erythritol 4-phosphate (MEP). The sequence is that of 2-C-methyl-D-erythritol 4-phosphate cytidylyltransferase from Clostridium botulinum (strain Loch Maree / Type A3).